We begin with the raw amino-acid sequence, 318 residues long: Glycine--tRNA ligase alpha subunit (318 aa).

It belongs to the class-II aminoacyl-tRNA synthetase family. Tetramer of two alpha and two beta subunits.

It is found in the cytoplasm. The catalysed reaction is tRNA(Gly) + glycine + ATP = glycyl-tRNA(Gly) + AMP + diphosphate. In Saccharophagus degradans (strain 2-40 / ATCC 43961 / DSM 17024), this protein is Glycine--tRNA ligase alpha subunit.